The chain runs to 776 residues: Glutathione biosynthesis bifunctional protein GshAB (776 aa).

The segment at 1-354 (MIKLDMTILD…QLADENENNI (354 aa)) is glutamate--cysteine ligase. One can recognise an ATP-grasp domain in the interval 521 to 775 (KLVLAENNIR…IGDKILDFLF (255 aa)). An ATP-binding site is contributed by 548–606 (SLFKDKQIVVKPKSTNYGWGISIFKNKFTTEDYQEALNIAFSYDSSVIIEEFIPGDEFR). Mg(2+)-binding residues include aspartate 728, glutamate 745, and asparagine 747. Mn(2+) contacts are provided by aspartate 728, glutamate 745, and asparagine 747.

It in the N-terminal section; belongs to the glutamate--cysteine ligase type 1 family. Type 2 subfamily. In terms of assembly, monomer. Mg(2+) serves as cofactor. Requires Mn(2+) as cofactor.

It carries out the reaction L-cysteine + L-glutamate + ATP = gamma-L-glutamyl-L-cysteine + ADP + phosphate + H(+). It catalyses the reaction gamma-L-glutamyl-L-cysteine + glycine + ATP = glutathione + ADP + phosphate + H(+). It functions in the pathway sulfur metabolism; glutathione biosynthesis; glutathione from L-cysteine and L-glutamate: step 1/2. It participates in sulfur metabolism; glutathione biosynthesis; glutathione from L-cysteine and L-glutamate: step 2/2. In terms of biological role, synthesizes glutathione from L-glutamate and L-cysteine via gamma-L-glutamyl-L-cysteine. In Listeria welshimeri serovar 6b (strain ATCC 35897 / DSM 20650 / CCUG 15529 / CIP 8149 / NCTC 11857 / SLCC 5334 / V8), this protein is Glutathione biosynthesis bifunctional protein GshAB.